Here is a 133-residue protein sequence, read N- to C-terminus: Small ribosomal subunit protein uS8 (133 aa).

The protein belongs to the universal ribosomal protein uS8 family. Part of the 30S ribosomal subunit. Contacts proteins S5 and S12.

One of the primary rRNA binding proteins, it binds directly to 16S rRNA central domain where it helps coordinate assembly of the platform of the 30S subunit. The polypeptide is Small ribosomal subunit protein uS8 (Chlamydia felis (strain Fe/C-56) (Chlamydophila felis)).